Here is a 570-residue protein sequence, read N- to C-terminus: Arginine--tRNA ligase (570 aa).

The short motif at 127–137 (ANPTGPLHLGH) is the 'HIGH' region element.

This sequence belongs to the class-I aminoacyl-tRNA synthetase family. Monomer.

The protein localises to the cytoplasm. The enzyme catalyses tRNA(Arg) + L-arginine + ATP = L-arginyl-tRNA(Arg) + AMP + diphosphate. The polypeptide is Arginine--tRNA ligase (Neorickettsia sennetsu (strain ATCC VR-367 / Miyayama) (Ehrlichia sennetsu)).